Consider the following 125-residue polypeptide: Outer membrane protein assembly factor BamE (125 aa).

The first 17 residues, 1–17 (MNKTLILALSALLGLAA), serve as a signal peptide directing secretion. Cys18 carries N-palmitoyl cysteine lipidation. Cys18 carries the S-diacylglycerol cysteine lipid modification.

The protein belongs to the BamE family. Part of the Bam complex.

The protein localises to the cell outer membrane. Its function is as follows. Part of the outer membrane protein assembly complex, which is involved in assembly and insertion of beta-barrel proteins into the outer membrane. In Neisseria meningitidis serogroup B (strain ATCC BAA-335 / MC58), this protein is Outer membrane protein assembly factor BamE.